Reading from the N-terminus, the 390-residue chain is 3,5-dihydroxyphenylacetyl-CoA synthase (390 aa).

Residue C173 is part of the active site.

The protein belongs to the thiolase-like superfamily. Chalcone/stilbene synthases family.

The catalysed reaction is 4 malonyl-CoA + 4 H(+) = (3,5-dihydroxyphenyl)acetyl-CoA + 4 CO2 + 3 CoA + H2O. It participates in antibiotic biosynthesis; vancomycin biosynthesis. In terms of biological role, involved in the biosynthesis of the nonproteinogenic amino acid monomer (S)-3,5-dihydroxyphenylglycine (Dpg) responsible of the production of vancomycin and teicoplanin antibiotics. Catalyzes the Claisen condensation of four molecules of malonyl-CoA to yield 3,5-dihydroxyphenylacetyl-CoA (DPA-CoA) and three free coenzyme A (CoA). DpgA requires the presence of the dehydratases DpgB and DpgD to facilitate the aromatization of the DPA-S-DgpA or DPA-S-CoA intermediate. This is 3,5-dihydroxyphenylacetyl-CoA synthase from Streptomyces toyocaensis.